The sequence spans 605 residues: Membrane protein insertase YidC (605 aa).

Residues 8–28 (MIIAIALSLAVLLGWNYFVAA) traverse the membrane as a helical segment. The span at 35 to 47 (RQQQAQTSASPSP) shows a compositional bias: low complexity. The disordered stretch occupies residues 35-71 (RQQQAQTSASPSPKEGGPSAPVPGTLPGASGGNPQAA). The next 4 helical transmembrane spans lie at 377 to 397 (LFGN…LFFL), 451 to 471 (WPVV…FVTI), 496 to 516 (LFGL…WPIV), and 540 to 560 (FTFM…GLVI).

It belongs to the OXA1/ALB3/YidC family. Type 1 subfamily. In terms of assembly, interacts with the Sec translocase complex via SecD. Specifically interacts with transmembrane segments of nascent integral membrane proteins during membrane integration.

It localises to the cell inner membrane. Functionally, required for the insertion and/or proper folding and/or complex formation of integral membrane proteins into the membrane. Involved in integration of membrane proteins that insert both dependently and independently of the Sec translocase complex, as well as at least some lipoproteins. Aids folding of multispanning membrane proteins. This chain is Membrane protein insertase YidC, found in Methylobacterium nodulans (strain LMG 21967 / CNCM I-2342 / ORS 2060).